A 123-amino-acid chain; its full sequence is UPF0102 protein VFMJ11_2324 (123 aa).

This sequence belongs to the UPF0102 family.

This chain is UPF0102 protein VFMJ11_2324, found in Aliivibrio fischeri (strain MJ11) (Vibrio fischeri).